A 610-amino-acid polypeptide reads, in one-letter code: POU domain, class 6, transcription factor 1 (610 aa).

A disordered region spans residues 55 to 87; sequence SSAGAAESGGDEEGSGQSLEATEEAQLDGPVTT. One can recognise a POU-specific domain in the interval 448–522; it reads EEAINLEEIR…VLERWLAEAE (75 aa). Positions 543-602 form a DNA-binding region, homeobox; it reads KRKRRTSFTPQAIEVLNTYFEKNSLPTGQEITEIAKELNYDREVVRVWFCNRRQTLKNTS.

This sequence belongs to the POU transcription factor family. Class-6 subfamily. Ubiquitously expressed during embryogenesis.

The protein resides in the nucleus. Transcription factor that binds with high affinity to the motif 5'-TAATGARAT-3'. In Danio rerio (Zebrafish), this protein is POU domain, class 6, transcription factor 1 (pou6f1).